Here is a 208-residue protein sequence, read N- to C-terminus: MVNKRMQTLLMQLRQQGIQDERLLQALEAVPRERFVDEALSHKAYENTALPIGSGQTISQPYMVARMTELLQLTPTSRVLEIGTGSGYQTAILAHLVEHVCSVERIKGLQWQAKRRLKQLDLHNVSTRHGDGWLGWASRGPFDAIIVTAAPPEIPNALLEQLDEGGILVLPVGEQAQTLKCVQRRNNEFKVETVEAVRFVPLVKGELA.

S59 is an active-site residue.

It belongs to the methyltransferase superfamily. L-isoaspartyl/D-aspartyl protein methyltransferase family.

The protein resides in the cytoplasm. It catalyses the reaction [protein]-L-isoaspartate + S-adenosyl-L-methionine = [protein]-L-isoaspartate alpha-methyl ester + S-adenosyl-L-homocysteine. Its function is as follows. Catalyzes the methyl esterification of L-isoaspartyl residues in peptides and proteins that result from spontaneous decomposition of normal L-aspartyl and L-asparaginyl residues. It plays a role in the repair and/or degradation of damaged proteins. The chain is Protein-L-isoaspartate O-methyltransferase from Yersinia enterocolitica serotype O:8 / biotype 1B (strain NCTC 13174 / 8081).